The sequence spans 132 residues: Small ribosomal subunit protein uS8 (132 aa).

This sequence belongs to the universal ribosomal protein uS8 family. Part of the 30S ribosomal subunit. Contacts proteins S5 and S12.

In terms of biological role, one of the primary rRNA binding proteins, it binds directly to 16S rRNA central domain where it helps coordinate assembly of the platform of the 30S subunit. This chain is Small ribosomal subunit protein uS8, found in Francisella tularensis subsp. holarctica (strain FTNF002-00 / FTA).